We begin with the raw amino-acid sequence, 515 residues long: Maturase K (515 aa).

The protein belongs to the intron maturase 2 family. MatK subfamily.

It localises to the plastid. It is found in the chloroplast. Usually encoded in the trnK tRNA gene intron. Probably assists in splicing its own and other chloroplast group II introns. This Pinus attenuata (Knobcone pine) protein is Maturase K.